Consider the following 126-residue polypeptide: Anti-adapter protein IraD (126 aa).

Belongs to the GpW/Gp25 family. IraD subfamily. In terms of assembly, interacts with RssB.

It localises to the cytoplasm. In terms of biological role, inhibits RpoS proteolysis by regulating RssB activity, thereby increasing the stability of the sigma stress factor RpoS during oxidative stress. Its effect on RpoS stability is due to its interaction with RssB, which probably blocks the interaction of RssB with RpoS, and the consequent delivery of the RssB-RpoS complex to the ClpXP protein degradation pathway. This Salmonella arizonae (strain ATCC BAA-731 / CDC346-86 / RSK2980) protein is Anti-adapter protein IraD.